Reading from the N-terminus, the 80-residue chain is Defensin-like protein 50 (80 aa).

A signal peptide spans 1-27; it reads MGFTKIVVTFFLVVMLAVSSSSQNAMA. 4 cysteine pairs are disulfide-bonded: C39–C79, C43–C66, C52–C77, and C56–C78.

This sequence belongs to the DEFL family.

Its subcellular location is the secreted. The chain is Defensin-like protein 50 (LCR49) from Arabidopsis thaliana (Mouse-ear cress).